The sequence spans 327 residues: Interleukin-12 subunit beta (327 aa).

The signal sequence occupies residues 1–22 (MCHQKLTISWFAMVLLVSPLMA). The 84-residue stretch at 23 to 106 (IWELEKDVYV…LSHSRLLLHK (84 aa)) folds into the Ig-like C2-type domain. A disulfide bond links C50 and C90. N-linked (GlcNAc...) asparagine glycans are attached at residues N125, N135, N223, and N315. In terms of domain architecture, Fibronectin type-III spans 238-327 (PPKNLQLKPL…WSEWASVSCN (90 aa)).

This sequence belongs to the IL-12B family. Heterodimer with IL12A; disulfide-linked. The heterodimer is known as interleukin IL-12. Heterodimer with IL23A; disulfide-linked. The heterodimer is known as interleukin IL-23. Also secreted as a monomer. Interacts with NBR1; this interaction promotes IL-12 secretion.

It localises to the secreted. Functionally, cytokine that can act as a growth factor for activated T and NK cells, enhance the lytic activity of NK/lymphokine-activated killer cells, and stimulate the production of IFN-gamma by resting PBMC. Its function is as follows. Associates with IL23A to form the IL-23 interleukin, a heterodimeric cytokine which functions in innate and adaptive immunity. IL-23 may constitute with IL-17 an acute response to infection in peripheral tissues. IL-23 binds to a heterodimeric receptor complex composed of IL12RB1 and IL23R, activates the Jak-Stat signaling cascade, stimulates memory rather than naive T-cells and promotes production of pro-inflammatory cytokines. IL-23 induces autoimmune inflammation and thus may be responsible for autoimmune inflammatory diseases and may be important for tumorigenesis. The protein is Interleukin-12 subunit beta (IL12B) of Sigmodon hispidus (Hispid cotton rat).